Here is a 203-residue protein sequence, read N- to C-terminus: MTGRWSPRLLAGLLAALVLSGCALLVPEDEREAQYEAFLEERAELRDWSVAGRAALRAEGEAVSLSLRWEQRGEVYTINLSGPFGAGAVRIEGQPGRVTLRDGAGQSATAQSPEELLAAQTGHQLPVTALRDWIVGRPADGLEVDELSLDRVGRPDRLEQAGWRVDFQGWTDVDGVDLPSRVDLTRGSTQMRVALSGWSRSDD.

The N-terminal stretch at 1–21 (MTGRWSPRLLAGLLAALVLSG) is a signal peptide. C22 carries the N-palmitoyl cysteine lipid modification. Residue C22 is the site of S-diacylglycerol cysteine attachment.

The protein belongs to the LolB family. In terms of assembly, monomer.

It is found in the cell outer membrane. In terms of biological role, plays a critical role in the incorporation of lipoproteins in the outer membrane after they are released by the LolA protein. In Halorhodospira halophila (strain DSM 244 / SL1) (Ectothiorhodospira halophila (strain DSM 244 / SL1)), this protein is Outer-membrane lipoprotein LolB.